Consider the following 143-residue polypeptide: Large ribosomal subunit protein uL11 (143 aa).

The protein belongs to the universal ribosomal protein uL11 family. Part of the ribosomal stalk of the 50S ribosomal subunit. Interacts with L10 and the large rRNA to form the base of the stalk. L10 forms an elongated spine to which L12 dimers bind in a sequential fashion forming a multimeric L10(L12)X complex. In terms of processing, one or more lysine residues are methylated.

In terms of biological role, forms part of the ribosomal stalk which helps the ribosome interact with GTP-bound translation factors. This Clavibacter sepedonicus (Clavibacter michiganensis subsp. sepedonicus) protein is Large ribosomal subunit protein uL11.